Here is a 106-residue protein sequence, read N- to C-terminus: Nucleoid-associated protein Noc_2594 (106 aa).

Disordered stretches follow at residues 1 to 20 (MKGG…SNME) and 85 to 106 (QSKE…KLPL). Residues 10–20 (KQAQQLQSNME) are compositionally biased toward polar residues.

The protein belongs to the YbaB/EbfC family. Homodimer.

It is found in the cytoplasm. The protein localises to the nucleoid. Functionally, binds to DNA and alters its conformation. May be involved in regulation of gene expression, nucleoid organization and DNA protection. The sequence is that of Nucleoid-associated protein Noc_2594 from Nitrosococcus oceani (strain ATCC 19707 / BCRC 17464 / JCM 30415 / NCIMB 11848 / C-107).